The chain runs to 167 residues: Epithelial membrane protein 2 (167 aa).

The chain crosses the membrane as a helical span at residues 1–21; sequence MLVLLAFIIVFHITSAALLLV. Residues N44, N47, and N52 are each glycosylated (N-linked (GlcNAc...) asparagine). 3 helical membrane passes run 67-87, 95-115, and 143-163; these read TMIL…LQLF, FVLT…AASI, and FILA…YLIL.

The protein belongs to the PMP-22/EMP/MP20 family. As to quaternary structure, interacts with PTK2; regulates PTK2 activation and localization. Interacts with ITGB3; regulates the levels of the heterodimer ITGA5-ITGB3 integrin surface expression. Interacts with P2RX7 (via C-terminus). Interacts with ITGB1; the interaction may be direct or indirect and ITGB1 has a heterodimer form.

It localises to the golgi apparatus membrane. The protein localises to the cell membrane. The protein resides in the apical cell membrane. Its subcellular location is the membrane raft. It is found in the cytoplasm. It localises to the nucleus. The protein localises to the perinuclear region. In terms of biological role, functions as a key regulator of cell membrane composition by regulating protein surface expression. Also, plays a role in regulation of processes including cell migration, cell proliferation, cell contraction and cell adhesion. Regulates transepithelial migration of neutrophils into the alveolar lumen, potentially via mediation of cell surface expression of adhesion markers and lipid raft formation. Negatively regulates caveolae formation by reducing CAV1 expression and CAV1 amount by increasing lysosomal degradation. Facilitates surface trafficking and the formation of lipid rafts bearing GPI-anchor proteins. Regulates surface expression of MHC1 and ICAM1 proteins increasing susceptibility to T-cell mediated cytotoxicity. Regulates the plasma membrane expression of the integrin heterodimers ITGA6-ITGB1, ITGA5-ITGB3 and ITGA5-ITGB1 resulting in modulation of cell-matrix adhesion. Also regulates many processes through PTK2. Regulates blood vessel endothelial cell migration and angiogenesis by regulating VEGF protein expression through PTK2 activation. Regulates cell migration and cell contraction through PTK2 and SRC activation. Regulates focal adhesion density, F-actin conformation and cell adhesion capacity through interaction with PTK2. Positively regulates cell proliferation. Plays a role during cell death and cell blebbing. Promotes angiogenesis and vasculogenesis through induction of VEGFA via a HIF1A-dependent pathway. Also plays a role in embryo implantation by regulating surface trafficking of integrin heterodimer ITGA5-ITGB3. Plays a role in placental angiogenesis and uterine natural killer cell regulation at the maternal-fetal placental interface, however not required in the maternal tissues for a viable pregnancy. Involved in the early stages of embryogenic development and cardiogenesis, potentially via regulation of epithelial-mesenchymal transition timing. May play a role in glomerular filtration. In Bos taurus (Bovine), this protein is Epithelial membrane protein 2 (EMP2).